We begin with the raw amino-acid sequence, 236 residues long: NLP effector protein 3 (236 aa).

The signal sequence occupies residues Met-1–Ala-19. A Conserved undecapeptide motif I motif is present at residues Ala-103–Asp-113. Residues Gly-120–Glu-126 carry the Hepta-peptide GHRHDWE motif II motif.

Belongs to the Necrosis inducing protein (NPP1) family.

It is found in the secreted. In terms of biological role, secreted effector that contributes to virulence during infection by P.capsici. Induces distinct chlorosis at 3 days after inoculation of host C.annuum leaves, and all the chlorotic areas gradually turn brown and become moderately necrotic at 7 days after inoculation. Leads only to chlorotic areas, without necrosis at 7 days after non-host N.benthamiana leaves infection. Induces cell death in hot pepper. In Phytophthora capsici, this protein is NLP effector protein 3.